We begin with the raw amino-acid sequence, 418 residues long: 3-isopropylmalate dehydratase large subunit (418 aa).

Positions 297, 357, and 360 each coordinate [4Fe-4S] cluster.

Belongs to the aconitase/IPM isomerase family. LeuC type 2 subfamily. As to quaternary structure, heterodimer of LeuC and LeuD. [4Fe-4S] cluster is required as a cofactor.

It carries out the reaction (2R,3S)-3-isopropylmalate = (2S)-2-isopropylmalate. The protein operates within amino-acid biosynthesis; L-leucine biosynthesis; L-leucine from 3-methyl-2-oxobutanoate: step 2/4. Its function is as follows. Catalyzes the isomerization between 2-isopropylmalate and 3-isopropylmalate, via the formation of 2-isopropylmaleate. This Elusimicrobium minutum (strain Pei191) protein is 3-isopropylmalate dehydratase large subunit.